The primary structure comprises 163 residues: NADH-quinone oxidoreductase subunit 9 (163 aa).

2 4Fe-4S ferredoxin-type domains span residues 54–84 and 94–123; these read LRRY…IDAE and TRYD…EGPN. [4Fe-4S] cluster contacts are provided by cysteine 64, cysteine 67, cysteine 70, cysteine 74, cysteine 103, cysteine 106, cysteine 109, and cysteine 113.

Belongs to the complex I 23 kDa subunit family. As to quaternary structure, NDH-1 is composed of at least 14 different subunits, Nqo1 to Nqo14. The complex has a L-shaped structure, with the hydrophobic arm (subunits Nqo7, Nqo8, Nqo10 to Nqo14) embedded in the inner membrane and the hydrophilic peripheral arm (subunits Nqo1 to Nqo6, Nqo9) protruding into the bacterial cytoplasm. The hydrophilic domain contains all the redox centers. [4Fe-4S] cluster is required as a cofactor.

The protein resides in the cell inner membrane. It catalyses the reaction a quinone + NADH + 5 H(+)(in) = a quinol + NAD(+) + 4 H(+)(out). NDH-1 shuttles electrons from NADH, via FMN and iron-sulfur (Fe-S) centers, to quinones in the respiratory chain. The immediate electron acceptor for the enzyme in this species is believed to be ubiquinone. Couples the redox reaction to proton translocation (for every two electrons transferred, four hydrogen ions are translocated across the cytoplasmic membrane), and thus conserves the redox energy in a proton gradient. This Paracoccus denitrificans protein is NADH-quinone oxidoreductase subunit 9.